The sequence spans 117 residues: Iron-sulfur cluster insertion protein ErpA (117 aa).

Iron-sulfur cluster contacts are provided by C45, C109, and C111.

Belongs to the HesB/IscA family. Homodimer. Iron-sulfur cluster serves as cofactor.

In terms of biological role, required for insertion of 4Fe-4S clusters for at least IspG. The chain is Iron-sulfur cluster insertion protein ErpA from Chromohalobacter salexigens (strain ATCC BAA-138 / DSM 3043 / CIP 106854 / NCIMB 13768 / 1H11).